Consider the following 102-residue polypeptide: Plastocyanin (102 aa).

The region spanning 1–102 is the Plastocyanin-like domain; sequence AKVEVGDEVG…ANMKGTLTVK (102 aa). 4 residues coordinate Cu cation: histidine 37, cysteine 87, histidine 90, and methionine 95.

It belongs to the plastocyanin family. The cofactor is Cu(2+).

It localises to the plastid. The protein resides in the chloroplast thylakoid membrane. Participates in electron transfer between P700 and the cytochrome b6-f complex in photosystem I. The chain is Plastocyanin (PETE) from Dryopteris crassirhizoma (Thick stemmed wood fern).